Here is a 337-residue protein sequence, read N- to C-terminus: 4-hydroxy-3-methylbut-2-enyl diphosphate reductase (337 aa).

A [4Fe-4S] cluster-binding site is contributed by Cys25. His54 and His87 together coordinate (2E)-4-hydroxy-3-methylbut-2-enyl diphosphate. 2 residues coordinate dimethylallyl diphosphate: His54 and His87. Isopentenyl diphosphate-binding residues include His54 and His87. [4Fe-4S] cluster is bound at residue Cys109. Position 137 (His137) interacts with (2E)-4-hydroxy-3-methylbut-2-enyl diphosphate. Residue His137 participates in dimethylallyl diphosphate binding. His137 serves as a coordination point for isopentenyl diphosphate. Glu139 acts as the Proton donor in catalysis. Residue Thr177 coordinates (2E)-4-hydroxy-3-methylbut-2-enyl diphosphate. [4Fe-4S] cluster is bound at residue Cys207. The (2E)-4-hydroxy-3-methylbut-2-enyl diphosphate site is built by Ser235, Ser236, Asn237, and Ser280. Ser235, Ser236, Asn237, and Ser280 together coordinate dimethylallyl diphosphate. Isopentenyl diphosphate-binding residues include Ser235, Ser236, Asn237, and Ser280.

It belongs to the IspH family. It depends on [4Fe-4S] cluster as a cofactor.

It catalyses the reaction isopentenyl diphosphate + 2 oxidized [2Fe-2S]-[ferredoxin] + H2O = (2E)-4-hydroxy-3-methylbut-2-enyl diphosphate + 2 reduced [2Fe-2S]-[ferredoxin] + 2 H(+). The enzyme catalyses dimethylallyl diphosphate + 2 oxidized [2Fe-2S]-[ferredoxin] + H2O = (2E)-4-hydroxy-3-methylbut-2-enyl diphosphate + 2 reduced [2Fe-2S]-[ferredoxin] + 2 H(+). It participates in isoprenoid biosynthesis; dimethylallyl diphosphate biosynthesis; dimethylallyl diphosphate from (2E)-4-hydroxy-3-methylbutenyl diphosphate: step 1/1. Its pathway is isoprenoid biosynthesis; isopentenyl diphosphate biosynthesis via DXP pathway; isopentenyl diphosphate from 1-deoxy-D-xylulose 5-phosphate: step 6/6. Functionally, catalyzes the conversion of 1-hydroxy-2-methyl-2-(E)-butenyl 4-diphosphate (HMBPP) into a mixture of isopentenyl diphosphate (IPP) and dimethylallyl diphosphate (DMAPP). Acts in the terminal step of the DOXP/MEP pathway for isoprenoid precursor biosynthesis. This chain is 4-hydroxy-3-methylbut-2-enyl diphosphate reductase, found in Leifsonia xyli subsp. xyli (strain CTCB07).